Consider the following 314-residue polypeptide: Methionyl-tRNA formyltransferase (314 aa).

Residue 108–111 participates in (6S)-5,6,7,8-tetrahydrofolate binding; sequence SLLP.

This sequence belongs to the Fmt family.

The enzyme catalyses L-methionyl-tRNA(fMet) + (6R)-10-formyltetrahydrofolate = N-formyl-L-methionyl-tRNA(fMet) + (6S)-5,6,7,8-tetrahydrofolate + H(+). In terms of biological role, attaches a formyl group to the free amino group of methionyl-tRNA(fMet). The formyl group appears to play a dual role in the initiator identity of N-formylmethionyl-tRNA by promoting its recognition by IF2 and preventing the misappropriation of this tRNA by the elongation apparatus. The polypeptide is Methionyl-tRNA formyltransferase (Akkermansia muciniphila (strain ATCC BAA-835 / DSM 22959 / JCM 33894 / BCRC 81048 / CCUG 64013 / CIP 107961 / Muc)).